A 363-amino-acid chain; its full sequence is 3-methyl-D-ornithine--L-lysine ligase (363 aa).

Residue Lys-10 participates in ATP binding. 11–12 is a binding site for L-lysine; it reads LQ. ATP is bound by residues Asp-31, 49–50, and 72–73; these read DV and EN. Residue Glu-72 participates in L-lysine binding. ADP-binding positions include Lys-104, Lys-131, Ser-138, and 160 to 163; that span reads EEYV. Residues 169-171 and Asp-225 each bind D-ornithine; that span reads SLE. Mg(2+)-binding residues include Glu-227, Glu-239, and Asp-241. Glu-239 contributes to the ADP binding site. D-ornithine-binding positions include 243–248 and Glu-302; that span reads RFPSQT. L-lysine is bound by residues Ser-246 and Glu-302.

Belongs to the PylC family. It depends on Mg(2+) as a cofactor.

The enzyme catalyses (3R)-3-methyl-D-ornithine + L-lysine + ATP = (3R)-3-methyl-D-ornithyl-N(6)-L-lysine + ADP + phosphate + H(+). Its pathway is amino-acid biosynthesis; L-pyrrolysine biosynthesis. Functionally, is required for the biosynthesis of pyrrolysine. Catalyzes the ATP-dependent ligation between (3R)-3-methyl-D-ornithine and L-lysine, leading to (3R)-3-methyl-D-ornithyl-N6-L-lysine. This is 3-methyl-D-ornithine--L-lysine ligase from Methanosarcina barkeri (strain Fusaro / DSM 804).